Reading from the N-terminus, the 203-residue chain is UPF0637 protein SSP1683 (203 aa).

The protein belongs to the UPF0637 family.

This is UPF0637 protein SSP1683 from Staphylococcus saprophyticus subsp. saprophyticus (strain ATCC 15305 / DSM 20229 / NCIMB 8711 / NCTC 7292 / S-41).